Here is a 422-residue protein sequence, read N- to C-terminus: Structural polyprotein (422 aa).

The Extracellular portion of the chain corresponds to 1–359 (SVTEHFNVYK…WPHEIIQYYY (359 aa)). N-linked (GlcNAc...) asparagine; by host glycosylation is found at N200 and N262. Residues 360–382 (GLYPAATIAAVSGXSLMALLTLA) form a helical membrane-spanning segment. The Cytoplasmic segment spans residues 383–422 (ATCCMLATARRKCLTPYALTPGAVVPLTLGLXXCAPRANA). S-palmitoyl cysteine; by host attachment occurs at residues C385, C395, and C416. The tract at residues 395-415 (CLTPYALTPGAVVPLTLGLXX) is transient transmembrane before p62-6K protein processing.

Spike glycoprotein E2: Processing of the precursor of protein E3/E2 into E2 and E3 results in a heterodimer of the spike glycoproteins E2 and E1. Spike glycoprotein E2: Spike at virion surface are constituted of three E2-E1 heterodimers. Spike glycoprotein E2: Interacts with 6K protein. Post-translationally, structural polyprotein: Specific enzymatic cleavages in vivo yield mature proteins. Capsid protein is auto-cleaved during polyprotein translation, unmasking a signal peptide at the N-terminus of the precursor of E3/E2. The remaining polyprotein is then targeted to the host endoplasmic reticulum, where host signal peptidase cleaves it into pE2, 6K and E1 proteins. pE2 is further processed to mature E3 and E2 by host furin in trans-Golgi vesicle. Spike glycoprotein E2: Palmitoylated via thioester bonds. These palmitoylations may induce disruption of the C-terminus transmembrane. This would result in the reorientation of E2 C-terminus from lumenal to cytoplasmic side. In terms of processing, spike glycoprotein E2: N-glycosylated.

It is found in the virion membrane. The protein localises to the host cell membrane. Spike glycoprotein E2: Plays a role in viral attachment to target host cell, by binding to the cell receptor. Synthesized as a p62 precursor which is processed by furin at the cell membrane just before virion budding, giving rise to E2-E1 heterodimer. The p62-E1 heterodimer is stable, whereas E2-E1 is unstable and dissociate at low pH. p62 is processed at the last step, presumably to avoid E1 fusion activation before its final export to cell surface. E2 C-terminus contains a transitory transmembrane that would be disrupted by palmitoylation, resulting in reorientation of the C-terminal tail from lumenal to cytoplasmic side. This step is critical since E2 C-terminus is involved in budding by interacting with capsid proteins. This release of E2 C-terminus in cytoplasm occurs lately in protein export, and precludes premature assembly of particles at the endoplasmic reticulum membrane. The protein is Structural polyprotein of Ross river virus (strain 213970) (RRV).